The following is a 176-amino-acid chain: MSVLLRSVTELCPVYSPFFGSMGITASIVFTVFGGAYGTAKSSVGISSVGVMKPEFIMRSLFPVVFAGVIGLYGLIVCIVLFINVNKSEYSLNRAFLDLGAGLTCGLCGLASGMSIGISGDCGVRGAAQQPKLFVSMLICLIFSEALALYGFIVALIMAATGDNSCVATASTSSSS.

Residues 1-17 (MSVLLRSVTELCPVYSP) lie on the Lumenal side of the membrane. A helical membrane pass occupies residues 18 to 38 (FFGSMGITASIVFTVFGGAYG). Over 39–62 (TAKSSVGISSVGVMKPEFIMRSLF) the chain is Cytoplasmic. Residues 63 to 83 (PVVFAGVIGLYGLIVCIVLFI) traverse the membrane as a helical segment. Residues 84-98 (NVNKSEYSLNRAFLD) are Lumenal-facing. A helical transmembrane segment spans residues 99-119 (LGAGLTCGLCGLASGMSIGIS). Residues 120 to 136 (GDCGVRGAAQQPKLFVS) lie on the Cytoplasmic side of the membrane. Residues 137-157 (MLICLIFSEALALYGFIVALI) traverse the membrane as a helical segment. The Lumenal portion of the chain corresponds to 158-176 (MAATGDNSCVATASTSSSS).

The protein belongs to the V-ATPase proteolipid subunit family. As to quaternary structure, V-ATPase is a heteromultimeric enzyme composed of a peripheral catalytic V1 complex (main components: subunits A, B, C, D, E, and F) attached to an integral membrane V0 proton pore complex (main component: the proteolipid protein; which is present as a hexamer that forms the proton-conducting pore).

It localises to the vacuole membrane. Proton-conducting pore forming subunit of the membrane integral V0 complex of vacuolar ATPase. V-ATPase is responsible for acidifying a variety of intracellular compartments in eukaryotic cells. The chain is V-type proton ATPase 16 kDa proteolipid subunit (VMA3) from Entamoeba dispar.